Consider the following 417-residue polypeptide: Tryptophan synthase beta chain (417 aa).

An N6-(pyridoxal phosphate)lysine modification is found at Lys111.

This sequence belongs to the TrpB family. As to quaternary structure, tetramer of two alpha and two beta chains. The cofactor is pyridoxal 5'-phosphate.

It catalyses the reaction (1S,2R)-1-C-(indol-3-yl)glycerol 3-phosphate + L-serine = D-glyceraldehyde 3-phosphate + L-tryptophan + H2O. The protein operates within amino-acid biosynthesis; L-tryptophan biosynthesis; L-tryptophan from chorismate: step 5/5. In terms of biological role, the beta subunit is responsible for the synthesis of L-tryptophan from indole and L-serine. In Fervidobacterium nodosum (strain ATCC 35602 / DSM 5306 / Rt17-B1), this protein is Tryptophan synthase beta chain.